The following is a 116-amino-acid chain: Probable transcriptional regulator WhiB6 (116 aa).

Residues Cys-12, Cys-53, Cys-56, and Cys-62 each coordinate [4Fe-4S] cluster. Residues Val-33–Arg-86 form the 4Fe-4S Wbl-type domain.

It belongs to the WhiB family. [4Fe-4S] cluster is required as a cofactor. In terms of processing, the Fe-S cluster can be nitrosylated by nitric oxide (NO). Upon Fe-S cluster removal intramolecular disulfide bonds are formed.

It localises to the cytoplasm. Functionally, acts as a transcriptional regulator. Probably redox-responsive. The apo- but not holo-form probably binds DNA. The chain is Probable transcriptional regulator WhiB6 (whiB6) from Mycobacterium tuberculosis (strain CDC 1551 / Oshkosh).